Here is a 152-residue protein sequence, read N- to C-terminus: Aspartate carbamoyltransferase regulatory chain (152 aa).

Zn(2+) contacts are provided by cysteine 109, cysteine 114, cysteine 138, and cysteine 141.

The protein belongs to the PyrI family. In terms of assembly, contains catalytic and regulatory chains. Zn(2+) serves as cofactor.

Its function is as follows. Involved in allosteric regulation of aspartate carbamoyltransferase. In Thermoplasma volcanium (strain ATCC 51530 / DSM 4299 / JCM 9571 / NBRC 15438 / GSS1), this protein is Aspartate carbamoyltransferase regulatory chain.